A 407-amino-acid chain; its full sequence is Peptidase T (407 aa).

A Zn(2+)-binding site is contributed by His78. Asp80 is a catalytic residue. Position 139 (Asp139) interacts with Zn(2+). The active-site Proton acceptor is the Glu173. Zn(2+)-binding residues include Glu174, Asp196, and His378.

Belongs to the peptidase M20B family. It depends on Zn(2+) as a cofactor.

The protein resides in the cytoplasm. It carries out the reaction Release of the N-terminal residue from a tripeptide.. Its function is as follows. Cleaves the N-terminal amino acid of tripeptides. This Shewanella pealeana (strain ATCC 700345 / ANG-SQ1) protein is Peptidase T.